Here is a 201-residue protein sequence, read N- to C-terminus: LexA repressor 1 (201 aa).

The H-T-H motif DNA-binding region spans 27–47 (LAEIAQAFGFASRNAAQKHVQ). Catalysis depends on for autocatalytic cleavage activity residues Ser-122 and Lys-159.

This sequence belongs to the peptidase S24 family. As to quaternary structure, homodimer.

The enzyme catalyses Hydrolysis of Ala-|-Gly bond in repressor LexA.. Functionally, represses a number of genes involved in the response to DNA damage (SOS response), including recA and lexA. In the presence of single-stranded DNA, RecA interacts with LexA causing an autocatalytic cleavage which disrupts the DNA-binding part of LexA, leading to derepression of the SOS regulon and eventually DNA repair. In Xanthomonas campestris pv. campestris (strain ATCC 33913 / DSM 3586 / NCPPB 528 / LMG 568 / P 25), this protein is LexA repressor 1.